A 238-amino-acid polypeptide reads, in one-letter code: Phosphoribosylaminoimidazole-succinocarboxamide synthase (238 aa).

It belongs to the SAICAR synthetase family.

It catalyses the reaction 5-amino-1-(5-phospho-D-ribosyl)imidazole-4-carboxylate + L-aspartate + ATP = (2S)-2-[5-amino-1-(5-phospho-beta-D-ribosyl)imidazole-4-carboxamido]succinate + ADP + phosphate + 2 H(+). It functions in the pathway purine metabolism; IMP biosynthesis via de novo pathway; 5-amino-1-(5-phospho-D-ribosyl)imidazole-4-carboxamide from 5-amino-1-(5-phospho-D-ribosyl)imidazole-4-carboxylate: step 1/2. The polypeptide is Phosphoribosylaminoimidazole-succinocarboxamide synthase (Marinomonas sp. (strain MWYL1)).